The chain runs to 558 residues: Acid-sensing ion channel 4-B (558 aa).

The Cytoplasmic portion of the chain corresponds to 1–71 (MPIEFVCKIK…TSERLGFRQT (71 aa)). The chain crosses the membrane as a helical span at residues 72-92 (LWGLALLVSLGLFLYQATWSA). Residues 93–433 (ATYLERPHLA…ETIEQKKAYD (341 aa)) lie on the Extracellular side of the membrane. Cystine bridges form between Cys-120–Cys-204 and Cys-182–Cys-189. Residues Asn-140, Asn-183, Asn-188, Asn-210, and Asn-245 are each glycosylated (N-linked (GlcNAc...) asparagine). 5 cysteine pairs are disulfide-bonded: Cys-298–Cys-373, Cys-317–Cys-369, Cys-321–Cys-367, Cys-330–Cys-351, and Cys-332–Cys-344. A glycan (N-linked (GlcNAc...) asparagine) is linked at Asn-374. The chain crosses the membrane as a helical span at residues 434 to 454 (IAGLLGDIGGQMGLFIGASIL). Residues 450–452 (GAS) carry the GAS motif; ion selectivity filter motif. Residues 455-558 (TILEILDYIY…QQAVQQDFAC (104 aa)) are Cytoplasmic-facing.

The protein belongs to the amiloride-sensitive sodium channel (TC 1.A.6) family. ASIC4 subfamily. As to quaternary structure, homotrimer. Heterotrimer; with other ASIC proteins producing functional channels. Expressed in central nervous system.

The protein localises to the cell membrane. The enzyme catalyses Na(+)(in) = Na(+)(out). Functionally, does not exhibit measurable stand-alone pH-gated sodium channel activity but may form pH-gated heterotrimeric sodium channels. In Danio rerio (Zebrafish), this protein is Acid-sensing ion channel 4-B.